Consider the following 590-residue polypeptide: Aspartate--tRNA(Asp/Asn) ligase (590 aa).

Glutamate 170 contributes to the L-aspartate binding site. The tract at residues 194-197 (QLFK) is aspartate. L-aspartate is bound at residue arginine 216. ATP is bound by residues 216-218 (RDE) and glutamine 225. Histidine 448 contacts L-aspartate. Glutamate 482 lines the ATP pocket. Residue arginine 489 participates in L-aspartate binding. 534 to 537 (GWDR) contributes to the ATP binding site. The segment at 557–590 (SGGGADPLTGAPAPITPQQRRESGIDAKPKKDGE) is disordered. Residues 575 to 590 (QRRESGIDAKPKKDGE) are compositionally biased toward basic and acidic residues.

Belongs to the class-II aminoacyl-tRNA synthetase family. Type 1 subfamily. In terms of assembly, homodimer.

It localises to the cytoplasm. It catalyses the reaction tRNA(Asx) + L-aspartate + ATP = L-aspartyl-tRNA(Asx) + AMP + diphosphate. Functionally, aspartyl-tRNA synthetase with relaxed tRNA specificity since it is able to aspartylate not only its cognate tRNA(Asp) but also tRNA(Asn). Reaction proceeds in two steps: L-aspartate is first activated by ATP to form Asp-AMP and then transferred to the acceptor end of tRNA(Asp/Asn). This is Aspartate--tRNA(Asp/Asn) ligase from Mycobacterium sp. (strain KMS).